We begin with the raw amino-acid sequence, 78 residues long: Large ribosomal subunit protein bL28 (78 aa).

Belongs to the bacterial ribosomal protein bL28 family.

This is Large ribosomal subunit protein bL28 from Francisella philomiragia subsp. philomiragia (strain ATCC 25017 / CCUG 19701 / FSC 153 / O#319-036).